The primary structure comprises 382 residues: ATP phosphoribosyltransferase regulatory subunit (382 aa).

This sequence belongs to the class-II aminoacyl-tRNA synthetase family. HisZ subfamily. In terms of assembly, heteromultimer composed of HisG and HisZ subunits.

It localises to the cytoplasm. It participates in amino-acid biosynthesis; L-histidine biosynthesis; L-histidine from 5-phospho-alpha-D-ribose 1-diphosphate: step 1/9. In terms of biological role, required for the first step of histidine biosynthesis. May allow the feedback regulation of ATP phosphoribosyltransferase activity by histidine. The polypeptide is ATP phosphoribosyltransferase regulatory subunit (Burkholderia pseudomallei (strain 1106a)).